The chain runs to 254 residues: Triosephosphate isomerase (254 aa).

Position 10 to 12 (10 to 12 (NWK)) interacts with substrate. The active-site Electrophile is the H99. The Proton acceptor role is filled by E169. Substrate is bound by residues G175, S215, and 236-237 (GG).

It belongs to the triosephosphate isomerase family. As to quaternary structure, homodimer.

It is found in the cytoplasm. It catalyses the reaction D-glyceraldehyde 3-phosphate = dihydroxyacetone phosphate. It functions in the pathway carbohydrate biosynthesis; gluconeogenesis. It participates in carbohydrate degradation; glycolysis; D-glyceraldehyde 3-phosphate from glycerone phosphate: step 1/1. Functionally, involved in the gluconeogenesis. Catalyzes stereospecifically the conversion of dihydroxyacetone phosphate (DHAP) to D-glyceraldehyde-3-phosphate (G3P). The protein is Triosephosphate isomerase of Chlamydia felis (strain Fe/C-56) (Chlamydophila felis).